The sequence spans 207 residues: Acyl-homoserine-lactone synthase (207 aa).

It belongs to the autoinducer synthase family.

The enzyme catalyses a fatty acyl-[ACP] + S-adenosyl-L-methionine = an N-acyl-L-homoserine lactone + S-methyl-5'-thioadenosine + holo-[ACP] + H(+). In terms of biological role, required for the synthesis of N-butanoyl-L-homoserine lactone (BHL), an autoinducer molecule which binds to AsaR. In Aeromonas salmonicida, this protein is Acyl-homoserine-lactone synthase (asaI).